Here is a 331-residue protein sequence, read N- to C-terminus: Tryptophan--tRNA ligase (331 aa).

ATP contacts are provided by residues 10-12 and 18-19; these read QPS and GN. A 'HIGH' region motif is present at residues 11-19; sequence PSGQLTLGN. An L-tryptophan-binding site is contributed by aspartate 133. Residues 145 to 147, valine 184, and 193 to 197 contribute to the ATP site; these read GED and KMSKS. Positions 193–197 match the 'KMSKS' region motif; that stretch reads KMSKS.

The protein belongs to the class-I aminoacyl-tRNA synthetase family. In terms of assembly, homodimer.

The protein resides in the cytoplasm. It catalyses the reaction tRNA(Trp) + L-tryptophan + ATP = L-tryptophyl-tRNA(Trp) + AMP + diphosphate + H(+). In terms of biological role, catalyzes the attachment of tryptophan to tRNA(Trp). The protein is Tryptophan--tRNA ligase of Listeria monocytogenes serovar 1/2a (strain ATCC BAA-679 / EGD-e).